The primary structure comprises 378 residues: Chaperone protein DnaJ (378 aa).

The J domain maps to 5–69 (EFYDRLGVSK…QKRAAYDQYG (65 aa)). A CR-type zinc finger spans residues 135-217 (GTEKEVKYHR…CHGTGHEKQA (83 aa)). The Zn(2+) site is built by Cys148, Cys151, Cys165, Cys168, Cys191, Cys194, Cys205, and Cys208. 4 CXXCXGXG motif repeats span residues 148–155 (CRTCNGSG), 165–172 (CGRCHGAG), 191–198 (CDVCHGRG), and 205–212 (CTTCHGTG).

Belongs to the DnaJ family. In terms of assembly, homodimer. Zn(2+) serves as cofactor.

Its subcellular location is the cytoplasm. Participates actively in the response to hyperosmotic and heat shock by preventing the aggregation of stress-denatured proteins and by disaggregating proteins, also in an autonomous, DnaK-independent fashion. Unfolded proteins bind initially to DnaJ; upon interaction with the DnaJ-bound protein, DnaK hydrolyzes its bound ATP, resulting in the formation of a stable complex. GrpE releases ADP from DnaK; ATP binding to DnaK triggers the release of the substrate protein, thus completing the reaction cycle. Several rounds of ATP-dependent interactions between DnaJ, DnaK and GrpE are required for fully efficient folding. Also involved, together with DnaK and GrpE, in the DNA replication of plasmids through activation of initiation proteins. This Streptococcus pneumoniae serotype 4 (strain ATCC BAA-334 / TIGR4) protein is Chaperone protein DnaJ.